The following is a 342-amino-acid chain: Heat-inducible transcription repressor HrcA (342 aa).

The protein belongs to the HrcA family.

In terms of biological role, negative regulator of class I heat shock genes (grpE-dnaK-dnaJ and groELS operons). Prevents heat-shock induction of these operons. This is Heat-inducible transcription repressor HrcA from Onion yellows phytoplasma (strain OY-M).